A 92-amino-acid polypeptide reads, in one-letter code: DNA-directed RNA polymerase subunit Rpo11 (92 aa).

This sequence belongs to the archaeal Rpo11/eukaryotic RPB11/RPC19 RNA polymerase subunit family. As to quaternary structure, part of the RNA polymerase complex.

The protein resides in the cytoplasm. It carries out the reaction RNA(n) + a ribonucleoside 5'-triphosphate = RNA(n+1) + diphosphate. In terms of biological role, DNA-dependent RNA polymerase (RNAP) catalyzes the transcription of DNA into RNA using the four ribonucleoside triphosphates as substrates. This is DNA-directed RNA polymerase subunit Rpo11 from Methanosarcina acetivorans (strain ATCC 35395 / DSM 2834 / JCM 12185 / C2A).